A 133-amino-acid polypeptide reads, in one-letter code: 14 kDa fatty acid-binding protein (133 aa).

Residues Arg-107 and 127–129 (RNY) each bind (5Z,8Z,11Z,14Z)-eicosatetraenoate. Residues Arg-107 and 127 to 129 (RNY) contribute to the (9Z)-octadecenoate site.

Belongs to the calycin superfamily. Fatty-acid binding protein (FABP) family. In terms of tissue distribution, tubercles, muscle layers and body.

It is found in the cytoplasm. In terms of biological role, may play a role in the transport of fatty acids. Binds various fatty acids, such as arachidonic, oleic, palmitic and linolenic acid (in vitro). This is 14 kDa fatty acid-binding protein from Schistosoma mansoni (Blood fluke).